A 194-amino-acid chain; its full sequence is Ras-like protein RAS1 (194 aa).

Position 16 to 23 (glycine 16 to serine 23) interacts with GTP. The Effector region motif lies at tyrosine 38–tyrosine 46. GTP contacts are provided by residues aspartate 63–glutamine 67 and asparagine 122–aspartate 125. Cysteine 191 is modified (cysteine methyl ester). Residue cysteine 191 is the site of S-geranylgeranyl cysteine attachment. Residues threonine 192–leucine 194 constitute a propeptide, removed in mature form.

It belongs to the small GTPase superfamily. Ras family.

The protein resides in the cell membrane. The catalysed reaction is GTP + H2O = GDP + phosphate + H(+). With respect to regulation, alternates between an inactive form bound to GDP and an active form bound to GTP. Activated by a guanine nucleotide-exchange factor (GEF) and inactivated by a GTPase-activating protein (GAP). Its function is as follows. Ras proteins bind GDP/GTP and possess intrinsic GTPase activity. This is Ras-like protein RAS1 (RAS1) from Hydra vulgaris (Hydra).